A 75-amino-acid chain; its full sequence is MKLLVVAVIACIMLIGFADPASGCKDCSCVICGPGGEPCPGCSARVPVCKDLINIMEGLERQVRQCACGEQVWLF.

Residues 1–24 (MKLLVVAVIACIMLIGFADPASGC) form the signal peptide.

The polypeptide is Salivary glue protein Sgs-8 (Sgs8) (Drosophila melanogaster (Fruit fly)).